Reading from the N-terminus, the 396-residue chain is Argininosuccinate synthase (396 aa).

Alanine 9–serine 17 is an ATP binding site. Tyrosine 85 contributes to the L-citrulline binding site. Glycine 115 serves as a coordination point for ATP. L-aspartate-binding residues include threonine 117, asparagine 121, and aspartate 122. Asparagine 121 is an L-citrulline binding site. Arginine 125, serine 173, glutamate 258, and tyrosine 270 together coordinate L-citrulline.

The protein belongs to the argininosuccinate synthase family. Type 1 subfamily. Homotetramer.

It is found in the cytoplasm. It carries out the reaction L-citrulline + L-aspartate + ATP = 2-(N(omega)-L-arginino)succinate + AMP + diphosphate + H(+). Its pathway is amino-acid biosynthesis; L-arginine biosynthesis; L-arginine from L-ornithine and carbamoyl phosphate: step 2/3. In Streptococcus mutans serotype c (strain ATCC 700610 / UA159), this protein is Argininosuccinate synthase.